Here is a 72-residue protein sequence, read N- to C-terminus: U-poneritoxin(01)-Om7a (72 aa).

The first 27 residues, 1 to 27 (MKPSGLTFAFLVVFMMAIMYNSVQVTA), serve as a signal peptide directing secretion. A propeptide spanning residues 28–45 (DADADAEAEALANALAEA) is cleaved from the precursor.

It belongs to the formicidae venom precursor-01 superfamily. In terms of tissue distribution, expressed by the venom gland.

The protein resides in the secreted. Peptide with unknown function that does not resemble any other pilosulin-like peptide and appears to have a coiled coil structure. The polypeptide is U-poneritoxin(01)-Om7a (Odontomachus monticola (Trap-jaw ant)).